The primary structure comprises 212 residues: Ribonuclease HII (212 aa).

Positions 19–212 (CIIVGVDEVG…SKISYMFKNS (194 aa)) constitute an RNase H type-2 domain. A divalent metal cation is bound by residues Asp25, Glu26, and Asp120.

It belongs to the RNase HII family. The cofactor is Mn(2+). Mg(2+) is required as a cofactor.

It localises to the cytoplasm. The enzyme catalyses Endonucleolytic cleavage to 5'-phosphomonoester.. In terms of biological role, endonuclease that specifically degrades the RNA of RNA-DNA hybrids. The polypeptide is Ribonuclease HII (Ehrlichia ruminantium (strain Welgevonden)).